A 462-amino-acid polypeptide reads, in one-letter code: Notoamide biosynthesis cluster protein O' (462 aa).

3 helical membrane passes run Ile-16 to Met-36, Ala-55 to Ile-75, and Trp-79 to Val-99. Asn-102 carries N-linked (GlcNAc...) asparagine glycosylation. The next 4 helical transmembrane spans lie at Ser-104–Thr-124, Ala-143–Val-163, Ile-173–Ala-193, and Ile-233–Tyr-253. The N-linked (GlcNAc...) asparagine glycan is linked to Asn-254. Helical transmembrane passes span Leu-265 to Leu-285, Met-297 to Val-317, Val-343 to Gly-363, and Ala-404 to Tyr-424. A disordered region spans residues Leu-443 to Asp-462. Residues Gly-449–Asp-462 show a composition bias toward basic and acidic residues.

This sequence belongs to the unc-93 family.

Its subcellular location is the membrane. In terms of biological role, part of the gene cluster that mediates the biosynthesis of notoamide, a fungal indole alkaloid that belongs to a family of natural products containing a characteristic bicyclo[2.2.2]diazaoctane core. The first step of notoamide biosynthesis involves coupling of L-proline and L-tryptophan by the bimodular NRPS notE', to produce cyclo-L-tryptophan-L-proline called brevianamide F. The reverse prenyltransferase notF' then acts as a deoxybrevianamide E synthase and converts brevianamide F to deoxybrevianamide E via reverse prenylation at C-2 of the indole ring leading to the bicyclo[2.2.2]diazaoctane core. Deoxybrevianamide E is further hydroxylated at C-6 of the indole ring, likely catalyzed by the cytochrome P450 monooxygenase notG', to yield 6-hydroxy-deoxybrevianamide E. 6-hydroxy-deoxybrevianamide E is a specific substrate of the prenyltransferase notC' for normal prenylation at C-7 to produce 6-hydroxy-7-prenyl-deoxybrevianamide, also called notoamide S. As the proposed pivotal branching point in notoamide biosynthesis, notoamide S can be diverted to notoamide E through an oxidative pyran ring closure putatively catalyzed by either notH' cytochrome P450 monooxygenase or the notD' FAD-linked oxidoreductase. This step would be followed by an indole 2,3-epoxidation-initiated pinacol-like rearrangement catalyzed by the notB' FAD-dependent monooxygenase leading to the formation of notoamide C and notoamide D. On the other hand notoamide S is converted to notoamide T by notH' (or notD'), a bifunctional oxidase that also functions as the intramolecular Diels-Alderase responsible for generation of (-)-notoamide T. To generate antipodal (+)-notoaminide T, notH (or notD) in Aspergillus strain MF297-2 is expected to catalyze a Diels-Alder reaction leading to the opposite stereochemistry. The remaining oxidoreductase notD' (or notH') likely catalyzes the oxidative pyran ring formation to yield (-)-stephacidin A. The FAD-dependent monooxygenase notI' is highly similar to notB' and is predicted to catalyze a similar conversion from (-)-stephacidin A to (+)-notoamide B via the 2,3-epoxidation of (-)-stephacidin A followed by a pinacol-type rearrangement. Finally, it remains unclear which enzyme could be responsible for the final hydroxylation steps leading to notoamide A and sclerotiamide. The function of notO' in the notoamide biosynthesis has not been determined yet. The sequence is that of Notoamide biosynthesis cluster protein O' from Aspergillus versicolor.